A 64-amino-acid polypeptide reads, in one-letter code: Antimicrobial peptide THP2 (64 aa).

The first 28 residues, 1–28 (MRILYLLFSLLFLALQVSPGLSSPKRDM), serve as a signal peptide directing secretion. Cystine bridges form between Cys-31–Cys-57, Cys-36–Cys-51, and Cys-41–Cys-58.

As to expression, expressed in circulating heterophil granulocytes and bone marrow (at protein level).

The protein resides in the secreted. In terms of biological role, antibacterial activity against the Gram-positive bacterium Staphylococcus aureus. Lacks antibacterial activity against the Gram-negative bacterium E.coli K-12. This is Antimicrobial peptide THP2 from Meleagris gallopavo (Wild turkey).